The following is a 184-amino-acid chain: MEAPGVLLVMGVSGSGKSTVGALLASKLGWKFYDADDYHSEENRIKMAKGVPLSDQDRIPWLCTLHDILLRDVALGQPVVLACSALKKTYRDILIRGGSDAPLKSDDSAKEPLAGGKLLVVYLCGSFDIIYGRLLQRKGHFMPPELLQSQFSILEPPSAPENFIQVSVDKSLPEITAAVMEALK.

11 to 18 serves as a coordination point for ATP; sequence GVSGSGKS.

This sequence belongs to the gluconokinase GntK/GntV family.

It catalyses the reaction D-gluconate + ATP = 6-phospho-D-gluconate + ADP + H(+). The protein operates within carbohydrate acid metabolism; D-gluconate degradation. The polypeptide is Probable gluconokinase (Idnk) (Mus musculus (Mouse)).